A 108-amino-acid polypeptide reads, in one-letter code: Phosphoribosyl-ATP pyrophosphatase (108 aa).

A disordered region spans residues 88-108 (VENELDRREGRSGIEEKASRK). Residues 91-108 (ELDRREGRSGIEEKASRK) show a composition bias toward basic and acidic residues.

It belongs to the PRA-PH family.

The protein resides in the cytoplasm. It carries out the reaction 1-(5-phospho-beta-D-ribosyl)-ATP + H2O = 1-(5-phospho-beta-D-ribosyl)-5'-AMP + diphosphate + H(+). It functions in the pathway amino-acid biosynthesis; L-histidine biosynthesis; L-histidine from 5-phospho-alpha-D-ribose 1-diphosphate: step 2/9. This Paracoccus denitrificans (strain Pd 1222) protein is Phosphoribosyl-ATP pyrophosphatase.